A 1580-amino-acid chain; its full sequence is Transcriptional activator GLI3 (1580 aa).

Residue Met-1 is modified to N-acetylmethionine. Polar residues-rich tracts occupy residues 1–10 and 58–78; these read MEAQSHSSTT and ITMQ…PSTS. The disordered stretch occupies residues 1 to 79; it reads MEAQSHSSTT…KVSEEPSTSS (79 aa). Arg-175 carries the omega-N-methylarginine modification. The disordered stretch occupies residues 368-475; the sequence is QSLGSAFGHS…DKDESKQEPE (108 aa). Positions 401–427 are enriched in polar residues; that stretch reads NPVQVSSGPSESSQNKPTSESAVSSTG. Glycyl lysine isopeptide (Lys-Gly) (interchain with G-Cter in SUMO2) cross-links involve residues Lys-438 and Lys-462. Residues 461-474 show a composition bias toward basic and acidic residues; the sequence is VKEEGDKDESKQEP. C2H2-type zinc fingers lie at residues 480–505, 513–540, 546–570, 576–601, and 607–632; these read TNCH…NNDH, FVCR…MRRH, HKCT…LRSH, YVCE…NRTH, and YVCK…KTVH. Residues 620 to 728 form a disordered region; the sequence is DPSSLRKHVK…PISNYSNSGL (109 aa). The span at 632–648 shows a compositional bias: basic and acidic residues; the sequence is HGPEAHVTKKQRGDIHP. Residue Ser-664 is modified to Phosphoserine. Positions 684 to 699 are enriched in basic and acidic residues; the sequence is SKREECLQVKTVKAEK. Positions 703–726 are enriched in low complexity; it reads SQPSPGGQSSCSSQQSPISNYSNS. Positions 745–845 are mediates interaction with DZIP1; it reads DETPIMDSTI…VDVTMLNMLN (101 aa). A Glycyl lysine isopeptide (Lys-Gly) (interchain with G-Cter in ubiquitin) cross-link involves residue Lys-773. Lys-779 participates in a covalent cross-link: Glycyl lysine isopeptide (Lys-Gly) (interchain with G-Cter in SUMO2); alternate. Lys-779 is covalently cross-linked (Glycyl lysine isopeptide (Lys-Gly) (interchain with G-Cter in ubiquitin); alternate). Residues Lys-784 and Lys-800 each participate in a glycyl lysine isopeptide (Lys-Gly) (interchain with G-Cter in ubiquitin) cross-link. Ser-849, Ser-865, Ser-877, and Ser-907 each carry phosphoserine; by PKA. A compositionally biased stretch (low complexity) spans 863 to 882; it reads RSSGISPCFSSRRSSEASQA. The tract at residues 863–918 is disordered; it reads RSSGISPCFSSRRSSEASQAEGRPQNVSVADSYDPISTDASRRSSEASQSDGLPSL. Over residues 908–918 the composition is skewed to polar residues; the sequence is EASQSDGLPSL. A phosphoserine; by PKA mark is found at Ser-980 and Ser-1006. The tract at residues 981-1042 is disordered; sequence DGGAHGYGRR…PAMATSAEKR (62 aa).

The protein belongs to the GLI C2H2-type zinc-finger protein family. As to quaternary structure, the full-length GLI3 form (GLI3FL) interacts with SUFU and this interaction regulates the formation of either repressor or activator forms of GLI3. Its association with SUFU is regulated by Hh signaling and dissociation of the SUFU-GLI3 interaction requires the presence of the ciliary motor KIF3A. Interacts with KIF7. The activator form of GLI3 (GLI3A) but not the repressor form (GLI3R) can interact with TRPS1. The phosphorylated form interacts with BTRC. Interacts with ZIC1. Interacts with ZIC3 (via C2H2-type domains 3, 4 and 5); the interaction enhances its transcriptional activity. Interacts with WRD11; the interaction associates EMX1 with GLI3. Interacts with DZIP1; retains GLI3 within the cytoplasm. In terms of processing, phosphorylated on multiple sites by protein kinase A (PKA) and phosphorylation by PKA primes further phosphorylation by CK1 and GSK3. Phosphorylated by DYRK2 (in vitro). Phosphorylation is essential for its proteolytic processing. Transcriptional repressor GLI3R, a C-terminally truncated form, is generated from the full-length GLI3 protein (GLI3FL/GLI3-190) through proteolytic processing. This process requires PKA-primed phosphorylation of GLI3, ubiquitination of GLI3 and the presence of BTRC. GLI3FL is complexed with SUFU in the cytoplasm and is maintained in a neutral state. Without the Hh signal, the SUFU-GLI3 complex is recruited to cilia, leading to the efficient processing of GLI3FL into GLI3R. GLI3R formation leads to its dissociation from SUFU, allowing it to translocate into the nucleus, and repress Hh target genes. When Hh signaling is initiated, SUFU dissociates from GLI3FL and this has two consequences. First, GLI3R production is halted. Second, free GLI3FL translocates to the nucleus, where it is phosphorylated, destabilized, and converted to a transcriptional activator (GLI3A). Phosphorylated in vitro by ULK3.

It is found in the nucleus. The protein localises to the cytoplasm. It localises to the cell projection. The protein resides in the cilium. Has a dual function as a transcriptional activator and a repressor of the sonic hedgehog (Shh) pathway, and plays a role in limb development. The full-length GLI3 form (GLI3FL) after phosphorylation and nuclear translocation, acts as an activator (GLI3A) while GLI3R, its C-terminally truncated form, acts as a repressor. A proper balance between the GLI3 activator and the repressor GLI3R, rather than the repressor gradient itself or the activator/repressor ratio gradient, specifies limb digit number and identity. In concert with TRPS1, plays a role in regulating the size of the zone of distal chondrocytes, in restricting the zone of PTHLH expression in distal cells and in activating chondrocyte proliferation. Binds to the minimal GLI-consensus sequence 5'-GGGTGGTC-3'. Plays a role in limb and brain development. The protein is Transcriptional activator GLI3 (GLI3) of Pan troglodytes (Chimpanzee).